A 445-amino-acid chain; its full sequence is tRNA-2-methylthio-N(6)-dimethylallyladenosine synthase (445 aa).

The 122-residue stretch at 3–124 (KKLYIKTYGC…LPELISKVVR (122 aa)) folds into the MTTase N-terminal domain. [4Fe-4S] cluster-binding residues include Cys-12, Cys-48, Cys-87, Cys-162, Cys-166, and Cys-169. One can recognise a Radical SAM core domain in the interval 148-380 (YPQGASSFIS…QQELATQQLA (233 aa)). The TRAM domain occupies 383–445 (QSCVGSTMRV…ALNSLTGEIL (63 aa)).

The protein belongs to the methylthiotransferase family. MiaB subfamily. In terms of assembly, monomer. Requires [4Fe-4S] cluster as cofactor.

The protein localises to the cytoplasm. The enzyme catalyses N(6)-dimethylallyladenosine(37) in tRNA + (sulfur carrier)-SH + AH2 + 2 S-adenosyl-L-methionine = 2-methylsulfanyl-N(6)-dimethylallyladenosine(37) in tRNA + (sulfur carrier)-H + 5'-deoxyadenosine + L-methionine + A + S-adenosyl-L-homocysteine + 2 H(+). Catalyzes the methylthiolation of N6-(dimethylallyl)adenosine (i(6)A), leading to the formation of 2-methylthio-N6-(dimethylallyl)adenosine (ms(2)i(6)A) at position 37 in tRNAs that read codons beginning with uridine. This Rickettsia prowazekii (strain Madrid E) protein is tRNA-2-methylthio-N(6)-dimethylallyladenosine synthase.